A 370-amino-acid polypeptide reads, in one-letter code: Protein RKD5 (370 aa).

The segment at 193–232 (DSETESEESVNEKTEHSEFENDKTEQSESDAKTEILKKKK) is disordered. The segment covering 202-228 (VNEKTEHSEFENDKTEQSESDAKTEIL) has biased composition (basic and acidic residues). The 86-residue stretch at 224–309 (KTEILKKKKR…AEKQQEKNEA (86 aa)) folds into the RWP-RK domain. The stretch at 283–328 (HRKIKSLDCLIHDLQREAEKQQEKNEAAAMAVAKKQEKLETEKRNI) forms a coiled coil. Residues 347–370 (NFKKRHRASRAKKNQESLVTSSST) form a disordered region. The span at 349–358 (KKRHRASRAK) shows a compositional bias: basic residues.

The protein resides in the nucleus. Its function is as follows. Putative transcription factor. The protein is Protein RKD5 (RKD5) of Arabidopsis thaliana (Mouse-ear cress).